The primary structure comprises 262 residues: Phosphoribosylformylglycinamidine synthase subunit PurQ (262 aa).

The 237-residue stretch at 2-238 (RIAVIQFPGT…FAWQLPRKHP (237 aa)) folds into the Glutamine amidotransferase type-1 domain. The active-site Nucleophile is Cys87. Active-site residues include His223 and Glu225.

As to quaternary structure, part of the FGAM synthase complex composed of 1 PurL, 1 PurQ and 2 PurS subunits.

Its subcellular location is the cytoplasm. It catalyses the reaction N(2)-formyl-N(1)-(5-phospho-beta-D-ribosyl)glycinamide + L-glutamine + ATP + H2O = 2-formamido-N(1)-(5-O-phospho-beta-D-ribosyl)acetamidine + L-glutamate + ADP + phosphate + H(+). The enzyme catalyses L-glutamine + H2O = L-glutamate + NH4(+). Its pathway is purine metabolism; IMP biosynthesis via de novo pathway; 5-amino-1-(5-phospho-D-ribosyl)imidazole from N(2)-formyl-N(1)-(5-phospho-D-ribosyl)glycinamide: step 1/2. Part of the phosphoribosylformylglycinamidine synthase complex involved in the purines biosynthetic pathway. Catalyzes the ATP-dependent conversion of formylglycinamide ribonucleotide (FGAR) and glutamine to yield formylglycinamidine ribonucleotide (FGAM) and glutamate. The FGAM synthase complex is composed of three subunits. PurQ produces an ammonia molecule by converting glutamine to glutamate. PurL transfers the ammonia molecule to FGAR to form FGAM in an ATP-dependent manner. PurS interacts with PurQ and PurL and is thought to assist in the transfer of the ammonia molecule from PurQ to PurL. This Methanothrix thermoacetophila (strain DSM 6194 / JCM 14653 / NBRC 101360 / PT) (Methanosaeta thermophila) protein is Phosphoribosylformylglycinamidine synthase subunit PurQ.